We begin with the raw amino-acid sequence, 463 residues long: Chromosomal replication initiator protein DnaA (463 aa).

The tract at residues 1–90 (MSLSLWQQCL…KPLSQIISQT (90 aa)) is domain I, interacts with DnaA modulators. The tract at residues 91–126 (VTASVSAPSAPIVRVAAPSRPSWDNAAPQPELSYRS) is domain II. Residues 127–343 (NVNPKHTFDN…GALNRVIANA (217 aa)) form a domain III, AAA+ region region. Gly-171, Gly-173, Lys-174, and Thr-175 together coordinate ATP. The interval 344–463 (NFTGRAITID…FSNLIRTLSS (120 aa)) is domain IV, binds dsDNA.

This sequence belongs to the DnaA family. As to quaternary structure, oligomerizes as a right-handed, spiral filament on DNA at oriC.

It localises to the cytoplasm. Functionally, plays an essential role in the initiation and regulation of chromosomal replication. ATP-DnaA binds to the origin of replication (oriC) to initiate formation of the DNA replication initiation complex once per cell cycle. Binds the DnaA box (a 9 base pair repeat at the origin) and separates the double-stranded (ds)DNA. Forms a right-handed helical filament on oriC DNA; dsDNA binds to the exterior of the filament while single-stranded (ss)DNA is stabiized in the filament's interior. The ATP-DnaA-oriC complex binds and stabilizes one strand of the AT-rich DNA unwinding element (DUE), permitting loading of DNA polymerase. After initiation quickly degrades to an ADP-DnaA complex that is not apt for DNA replication. Binds acidic phospholipids. In Serratia proteamaculans (strain 568), this protein is Chromosomal replication initiator protein DnaA.